The chain runs to 111 residues: Universal stress protein B (111 aa).

Residues 1-21 (MISTVSLFWALCVVCIVNMAR) traverse the membrane as a helical segment. Topologically, residues 22–89 (YFSSLRALLV…IRRCERVRRQ (68 aa)) are cytoplasmic. Residues 90 to 110 (FLLTSALCGLVVVSLIALMIW) form a helical membrane-spanning segment. Position 111 (H111) is a topological domain, periplasmic.

Belongs to the universal stress protein B family.

The protein localises to the cell inner membrane. The polypeptide is Universal stress protein B (uspB) (Salmonella choleraesuis (strain SC-B67)).